We begin with the raw amino-acid sequence, 104 residues long: Large ribosomal subunit protein uL24 (104 aa).

The protein belongs to the universal ribosomal protein uL24 family. In terms of assembly, part of the 50S ribosomal subunit.

In terms of biological role, one of two assembly initiator proteins, it binds directly to the 5'-end of the 23S rRNA, where it nucleates assembly of the 50S subunit. Its function is as follows. One of the proteins that surrounds the polypeptide exit tunnel on the outside of the subunit. The polypeptide is Large ribosomal subunit protein uL24 (Methylobacterium radiotolerans (strain ATCC 27329 / DSM 1819 / JCM 2831 / NBRC 15690 / NCIMB 10815 / 0-1)).